A 248-amino-acid chain; its full sequence is Putative amino-acid ABC transporter-binding protein PatH (248 aa).

Residues 1 to 21 (MKNWIKVAVAAIALSAATVQA) form the signal peptide.

The protein belongs to the bacterial solute-binding protein 3 family.

It is found in the periplasm. Functionally, probably part of a binding-protein-dependent transport system for an amino acid. In Vibrio harveyi (Beneckea harveyi), this protein is Putative amino-acid ABC transporter-binding protein PatH (patH).